The chain runs to 422 residues: MNVPPVLLLFLLSSVRATEQPQVVTEHPSMDAALTGANASHFWANYTFSDWQNFVGRRRYGAESQNPTVKALLIVAYSFIIVFSLFGNVLVCHVIFKNQRMHSATSLFIVNLAVADIMITLLNTPFTLVRFVNSTWVFGKGMCHVSRFAQYCSLHVSALTLTAIAVDRHQVIMHPLKPRISITKGVIYIAVIWVMATFFSLPHAICQKLFTFKYSEDIVRSLCLPDFPEPADLFWKYLDLATFILLYLLPLFIISVAYARVAKKLWLCNTIGDVTTEQYLALRRKKKTTVKMLVLVVVLFALCWFPLNCYVLLLSSKAIHTNNALYFAFHWFAMSSTCYNPFIYCWLNENFRVELKALLSMCQRPSKPQEDRLPSPVPSFRVAWTEKSHGRRALLANHHLPSSQIQSGKTDLSSVEPTVAVS.

An N-terminal signal peptide occupies residues 1–17 (MNVPPVLLLFLLSSVRA). The Extracellular portion of the chain corresponds to 18–70 (TEQPQVVTEHPSMDAALTGANASHFWANYTFSDWQNFVGRRRYGAESQNPTVK). A helical transmembrane segment spans residues 71 to 91 (ALLIVAYSFIIVFSLFGNVLV). Residues 92–106 (CHVIFKNQRMHSATS) are Cytoplasmic-facing. A helical transmembrane segment spans residues 107–127 (LFIVNLAVADIMITLLNTPFT). Over 128-143 (LVRFVNSTWVFGKGMC) the chain is Extracellular. A disulfide bond links C143 and C223. The helical transmembrane segment at 144-166 (HVSRFAQYCSLHVSALTLTAIAV) threads the bilayer. Over 167–184 (DRHQVIMHPLKPRISITK) the chain is Cytoplasmic. Residues 185–205 (GVIYIAVIWVMATFFSLPHAI) form a helical membrane-spanning segment. Topologically, residues 206 to 236 (CQKLFTFKYSEDIVRSLCLPDFPEPADLFWK) are extracellular. The chain crosses the membrane as a helical span at residues 237–257 (YLDLATFILLYLLPLFIISVA). The Cytoplasmic segment spans residues 258 to 292 (YARVAKKLWLCNTIGDVTTEQYLALRRKKKTTVKM). A helical transmembrane segment spans residues 293-313 (LVLVVVLFALCWFPLNCYVLL). The Extracellular segment spans residues 314–326 (LSSKAIHTNNALY). The chain crosses the membrane as a helical span at residues 327–347 (FAFHWFAMSSTCYNPFIYCWL). The Cytoplasmic portion of the chain corresponds to 348–422 (NENFRVELKA…SSVEPTVAVS (75 aa)). Positions 401-422 (PSSQIQSGKTDLSSVEPTVAVS) are disordered.

This sequence belongs to the G-protein coupled receptor 1 family. Expressed preferentially in brain, and its neuronal expression is relegated to limbic brain regions, particularly in forebrain.

The protein localises to the cell membrane. Its function is as follows. G-protein coupled receptor for PEN, a neuropeptide produced from the precursor protein, proSAAS (encoded by PCSK1N). Acts through a G(i)- and G(q)-alpha-alpha-mediated pathway in response to PEN. Plays a role in food intake and body weight regulation. May contribute to the regulation of anxiety-related behaviors. This Rattus norvegicus (Rat) protein is G-protein coupled receptor 83.